Consider the following 955-residue polypeptide: Valine--tRNA ligase (955 aa).

The short motif at proline 41–histidine 51 is the 'HIGH' region element. Residues lysine 554 to serine 558 carry the 'KMSKS' region motif. Lysine 557 is an ATP binding site. Residues glutamine 926–lysine 946 adopt a coiled-coil conformation.

It belongs to the class-I aminoacyl-tRNA synthetase family. ValS type 1 subfamily. Monomer.

The protein localises to the cytoplasm. The catalysed reaction is tRNA(Val) + L-valine + ATP = L-valyl-tRNA(Val) + AMP + diphosphate. In terms of biological role, catalyzes the attachment of valine to tRNA(Val). As ValRS can inadvertently accommodate and process structurally similar amino acids such as threonine, to avoid such errors, it has a 'posttransfer' editing activity that hydrolyzes mischarged Thr-tRNA(Val) in a tRNA-dependent manner. The sequence is that of Valine--tRNA ligase from Buchnera aphidicola subsp. Acyrthosiphon pisum (strain APS) (Acyrthosiphon pisum symbiotic bacterium).